The primary structure comprises 435 residues: Probable long-chain-alcohol O-fatty-acyltransferase 11 (435 aa).

Helical transmembrane passes span 7 to 27 (NLIK…YVPT), 36 to 56 (FLSV…FASV), 59 to 79 (SGYT…LFSF), 120 to 140 (PIEV…SVVL), 149 to 169 (IYPI…LEIL), 200 to 220 (DFWG…DVYA), 238 to 258 (LGVF…FFYI), 263 to 283 (PTGE…AYDA), 300 to 320 (CLIL…WLFF), 363 to 383 (FFTG…IGFV), and 406 to 426 (FFIG…IGFV).

This sequence belongs to the wax synthase family.

The protein localises to the membrane. It catalyses the reaction a long chain fatty alcohol + a fatty acyl-CoA = a wax ester + CoA. Its function is as follows. Catalyzes the final step in the synthesis of long-chain linear esters (waxes). This is Probable long-chain-alcohol O-fatty-acyltransferase 11 from Arabidopsis thaliana (Mouse-ear cress).